The primary structure comprises 34 residues: Turripeptide Pal9a (34 aa).

3 disulfides stabilise this stretch: Cys3/Cys17, Cys8/Cys19, and Cys13/Cys30. Gln34 carries the post-translational modification Glutamine amide.

As to expression, expressed by the venom duct.

Its subcellular location is the secreted. The polypeptide is Turripeptide Pal9a (Polystira albida (White giant-turris)).